The sequence spans 316 residues: ADDLTTLRNGTLDRGITPDCTFNEKDIELHVYSRDKRNGIILKKEILKNYDLFQKSQISHQIAILIHGFLSTGNNENFDAMAKALIEIDNFLVISVDWKKGACNAFASTNDVLGYSQAVGNTRHVGKYVADFTKLLVEQYKVPMSNIRLIGHSLGAHTSGFAGKEVQRLKLGKYKEIIGLDPAGPSFLTSKCPDRLCETDAEYVQAIHTSAILGVYYNVGSVDFYVNYGKSQPGCSEPSCSHTKAVKYLTECIKRECCLIGTPWKSYFSTPKPISQCKRDTCVCVGLNAQSYPAKGSFYVPVDKDAPYCHNEGIKL.

A signal peptide spans 1-4; it reads ADDL. A propeptide spanning residues 5–14 is cleaved from the precursor; it reads TTLRNGTLDR. An intrachain disulfide couples Cys-20 to Cys-103. The Nucleophile role is filled by Ser-153. Asp-181 (charge relay system) is an active-site residue. Intrachain disulfides connect Cys-192–Cys-197 and Cys-235–Cys-240. The Charge relay system role is filled by His-242. Cystine bridges form between Cys-257-Cys-284, Cys-258-Cys-309, and Cys-277-Cys-282.

It belongs to the AB hydrolase superfamily. Lipase family. As to expression, expressed by the venom gland.

It is found in the secreted. It carries out the reaction a 1,2-diacyl-sn-glycero-3-phosphocholine + H2O = a 2-acyl-sn-glycero-3-phosphocholine + a fatty acid + H(+). Its function is as follows. Catalyzes the hydrolysis of phosphatidylcholine with phospholipase A1 activity. May act as an allergen and induce hemolytic activity. The polypeptide is Phospholipase A1 3 (Polistes dominula (European paper wasp)).